The following is a 556-amino-acid chain: CTP synthase (556 aa).

The segment at 1–266 is amidoligase domain; sequence MKYIFVTGGV…GKVVEDLLGL (266 aa). CTP is bound at residue serine 12. Residue serine 12 coordinates UTP. Residue 13–18 coordinates ATP; the sequence is SLGKGV. Tyrosine 53 is an L-glutamine binding site. Aspartate 70 lines the ATP pocket. Positions 70 and 140 each coordinate Mg(2+). CTP is bound by residues 147 to 149, 187 to 192, and lysine 223; these read DIE and KTKPTQ. UTP is bound by residues 187 to 192 and lysine 223; that span reads KTKPTQ. One can recognise a Glutamine amidotransferase type-1 domain in the interval 291–544; that stretch reads TIAIAGKYTE…VKAALRGQSS (254 aa). Glycine 356 is a binding site for L-glutamine. Cysteine 383 serves as the catalytic Nucleophile; for glutamine hydrolysis. L-glutamine contacts are provided by residues 384 to 387, glutamate 407, and arginine 467; that span reads LGMQ. Active-site residues include histidine 517 and glutamate 519.

It belongs to the CTP synthase family. In terms of assembly, homotetramer.

The catalysed reaction is UTP + L-glutamine + ATP + H2O = CTP + L-glutamate + ADP + phosphate + 2 H(+). It carries out the reaction L-glutamine + H2O = L-glutamate + NH4(+). The enzyme catalyses UTP + NH4(+) + ATP = CTP + ADP + phosphate + 2 H(+). It functions in the pathway pyrimidine metabolism; CTP biosynthesis via de novo pathway; CTP from UDP: step 2/2. With respect to regulation, allosterically activated by GTP, when glutamine is the substrate; GTP has no effect on the reaction when ammonia is the substrate. The allosteric effector GTP functions by stabilizing the protein conformation that binds the tetrahedral intermediate(s) formed during glutamine hydrolysis. Inhibited by the product CTP, via allosteric rather than competitive inhibition. Catalyzes the ATP-dependent amination of UTP to CTP with either L-glutamine or ammonia as the source of nitrogen. Regulates intracellular CTP levels through interactions with the four ribonucleotide triphosphates. This Deinococcus deserti (strain DSM 17065 / CIP 109153 / LMG 22923 / VCD115) protein is CTP synthase.